The chain runs to 245 residues: Ribosomal RNA large subunit methyltransferase E (245 aa).

The tract at residues 1–25 is disordered; that stretch reads MTKSPIGGNRSGRKLGQKVKKGKLK. A compositionally biased stretch (basic residues) spans 11-25; sequence SGRKLGQKVKKGKLK. Residues G81, W83, D104, D120, and D144 each contribute to the S-adenosyl-L-methionine site. The active-site Proton acceptor is the K184.

The protein belongs to the class I-like SAM-binding methyltransferase superfamily. RNA methyltransferase RlmE family.

It is found in the cytoplasm. The catalysed reaction is uridine(2552) in 23S rRNA + S-adenosyl-L-methionine = 2'-O-methyluridine(2552) in 23S rRNA + S-adenosyl-L-homocysteine + H(+). Specifically methylates the uridine in position 2552 of 23S rRNA at the 2'-O position of the ribose in the fully assembled 50S ribosomal subunit. This chain is Ribosomal RNA large subunit methyltransferase E, found in Rhizobium meliloti (strain 1021) (Ensifer meliloti).